A 611-amino-acid polypeptide reads, in one-letter code: Chaperone protein HscA (611 aa).

It belongs to the heat shock protein 70 family.

In terms of biological role, chaperone involved in the maturation of iron-sulfur cluster-containing proteins. Has a low intrinsic ATPase activity which is markedly stimulated by HscB. Involved in the maturation of IscU. The protein is Chaperone protein HscA of Buchnera aphidicola subsp. Acyrthosiphon pisum (strain 5A).